Consider the following 242-residue polypeptide: Zinc import ATP-binding protein ZnuC (242 aa).

Positions 24-241 (INVENLSFFY…EKFLKMFSSY (218 aa)) constitute an ABC transporter domain. 56 to 63 (GPNGGGKT) is an ATP binding site.

The protein belongs to the ABC transporter superfamily. Zinc importer (TC 3.A.1.15.5) family. The complex is composed of two ATP-binding proteins (ZnuC), two transmembrane proteins (ZnuB) and a solute-binding protein (ZnuA).

It is found in the cell inner membrane. It carries out the reaction Zn(2+)(out) + ATP(in) + H2O(in) = Zn(2+)(in) + ADP(in) + phosphate(in) + H(+)(in). Part of the ABC transporter complex ZnuABC involved in zinc import. Responsible for energy coupling to the transport system. The chain is Zinc import ATP-binding protein ZnuC from Ehrlichia chaffeensis (strain ATCC CRL-10679 / Arkansas).